The sequence spans 540 residues: Tyrosine-protein kinase transforming protein erbB (540 aa).

Positions 132-399 (FKKVKVLGFG…KMARDPPRYL (268 aa)) constitute a Protein kinase domain. ATP contacts are provided by residues 138 to 146 (LGFGAFGTV) and lysine 165. Aspartate 257 serves as the catalytic Proton acceptor.

It belongs to the protein kinase superfamily. Tyr protein kinase family. EGF receptor subfamily.

The catalysed reaction is L-tyrosyl-[protein] + ATP = O-phospho-L-tyrosyl-[protein] + ADP + H(+). This chain is Tyrosine-protein kinase transforming protein erbB (V-ERBB), found in Avian erythroblastosis virus (strain ts167).